Reading from the N-terminus, the 496-residue chain is MLO-like protein 15 (496 aa).

At 1-9 (MAGGGTTLE) the chain is on the extracellular side. Residues 10-30 (YTPTWVVALVCSVIVSISFAV) form a helical membrane-spanning segment. The Cytoplasmic segment spans residues 31 to 59 (ERLIHRAGKHFKNNDQKQLFGALQKIKEE). Residues 60–80 (LMLVGFISLLLSVGQSKIAKI) form a helical membrane-spanning segment. The Extracellular segment spans residues 81-147 (CISKELSEKF…MSLSALHELH (67 aa)). The helical transmembrane segment at 148-168 (IFIFVLAVAHIIFCLLTIVFG) threads the bilayer. The Cytoplasmic portion of the chain corresponds to 169–269 (TMKIKQWKKW…KYLMRALNSD (101 aa)). A helical transmembrane segment spans residues 270 to 290 (FKKVVGISWYLWVFVVLFLLL). Asn-291 is a topological domain (extracellular). The helical transmembrane segment at 292-312 (IVAWHVYFWLAFIPLILLLAV) threads the bilayer. Over 313–355 (GTKLEHIITDLAHEVAEKHIAVEGDLVVRPSDDLFWFQSPRLV) the chain is Cytoplasmic. The helical transmembrane segment at 356–376 (LFLIHFILFQNSFEIAYFFFI) threads the bilayer. The Extracellular portion of the chain corresponds to 377 to 397 (LFQFGWDSCIMDHVKFVIPRL). A helical membrane pass occupies residues 398 to 418 (VIGVIIQLLCSYSTLPLYALV). At 419 to 496 (TQMGSSFKGA…KEKSEIAHHD (78 aa)) the chain is on the cytoplasmic side. The calmodulin-binding stretch occupies residues 432 to 453 (EQTQEHLVGWAKMAKRGVKKGA). The interval 454–496 (TQVGTSHDATSPRPSIQLNSLLGKGSSQQNQNPKEKSEIAHHD) is disordered. Over residues 455–485 (QVGTSHDATSPRPSIQLNSLLGKGSSQQNQN) the composition is skewed to polar residues. Residues 486-496 (PKEKSEIAHHD) are compositionally biased toward basic and acidic residues.

This sequence belongs to the MLO family.

The protein resides in the membrane. Functionally, may be involved in modulation of pathogen defense and leaf cell death. Activity seems to be regulated by Ca(2+)-dependent calmodulin binding and seems not to require heterotrimeric G proteins. The sequence is that of MLO-like protein 15 (MLO15) from Arabidopsis thaliana (Mouse-ear cress).